The sequence spans 93 residues: Large ribosomal subunit protein bL31B (93 aa).

The protein belongs to the bacterial ribosomal protein bL31 family. Type B subfamily. Part of the 50S ribosomal subunit.

The sequence is that of Large ribosomal subunit protein bL31B from Pseudomonas syringae pv. tomato (strain ATCC BAA-871 / DC3000).